The chain runs to 475 residues: NAD-dependent histone deacetylase sir2 (475 aa).

Positions methionine 1 to threonine 12 are enriched in polar residues. The segment at methionine 1–alanine 35 is disordered. The span at proline 20–alanine 35 shows a compositional bias: low complexity. Serine 55 carries the post-translational modification Phosphoserine. The 298-residue stretch at lysine 139–leucine 436 folds into the Deacetylase sirtuin-type domain. NAD(+) contacts are provided by residues glycine 164–tyrosine 183 and glutamine 246–aspartate 249. The Proton acceptor role is filled by histidine 266. Residues cysteine 274, cysteine 277, cysteine 298, and cysteine 301 each coordinate Zn(2+). NAD(+) contacts are provided by residues glycine 373–serine 375, serine 398–threonine 400, and cysteine 416.

The protein belongs to the sirtuin family. Class I subfamily. Zn(2+) is required as a cofactor.

The protein localises to the nucleus. It localises to the chromosome. The protein resides in the centromere. It is found in the telomere. It carries out the reaction N(6)-acetyl-L-lysyl-[protein] + NAD(+) + H2O = 2''-O-acetyl-ADP-D-ribose + nicotinamide + L-lysyl-[protein]. Its function is as follows. Involved in silencing within the mating-type region, at the telomeres, and according to PubMed:12867036 also within centromeric DNA regions. Required for the localization of swi6 to the telomeres, silent mating type region, and according to PubMed:12867036 to the centromeric DNA regions. According to PubMed:15545655 not required for the localization of swi6 to centromeric foci. Deacetylates histone H3 on 'Lys-9' and 'Lys-16' of histone H4. This has a direct role in heterochromatin assembly. The polypeptide is NAD-dependent histone deacetylase sir2 (sir2) (Schizosaccharomyces pombe (strain 972 / ATCC 24843) (Fission yeast)).